The sequence spans 61 residues: Beta-defensin 133 (61 aa).

Residues 1-23 form the signal peptide; that stretch reads MKIHVFLFVLFFFLVPIATRVKC. 2 disulfides stabilise this stretch: cysteine 31/cysteine 59 and cysteine 38/cysteine 52.

This sequence belongs to the beta-defensin family.

Its subcellular location is the secreted. In terms of biological role, has antibacterial activity. This is Beta-defensin 133 (DEFB133) from Homo sapiens (Human).